The primary structure comprises 393 residues: S-adenosylmethionine synthase 1 (393 aa).

Glu-9 is a Mg(2+) binding site. Residue His-15 coordinates ATP. Glu-43 contacts K(+). Glu-56 and Gln-99 together coordinate L-methionine. Residues 167-169 (DGK), 235-238 (SGRF), Asp-246, 252-253 (RK), Ala-269, Lys-273, and Lys-277 contribute to the ATP site. L-methionine is bound at residue Asp-246. Lys-277 contributes to the L-methionine binding site.

It belongs to the AdoMet synthase family. Homotetramer. The cofactor is Mn(2+). It depends on Mg(2+) as a cofactor. Co(2+) serves as cofactor. Requires K(+) as cofactor.

The protein localises to the cytoplasm. It carries out the reaction L-methionine + ATP + H2O = S-adenosyl-L-methionine + phosphate + diphosphate. The protein operates within amino-acid biosynthesis; S-adenosyl-L-methionine biosynthesis; S-adenosyl-L-methionine from L-methionine: step 1/1. Functionally, catalyzes the formation of S-adenosylmethionine from methionine and ATP. The reaction comprises two steps that are both catalyzed by the same enzyme: formation of S-adenosylmethionine (AdoMet) and triphosphate, and subsequent hydrolysis of the triphosphate. The polypeptide is S-adenosylmethionine synthase 1 (METK1) (Solanum tuberosum (Potato)).